Reading from the N-terminus, the 289-residue chain is Acetyl-coenzyme A carboxylase carboxyl transferase subunit beta (289 aa).

Residues 23–289 enclose the CoA carboxyltransferase N-terminal domain; that stretch reads HWIKCPSCSA…YDENPCLLHL (267 aa). Zn(2+) contacts are provided by C27, C30, C46, and C49. The C4-type zinc-finger motif lies at 27-49; it reads CPSCSALMYYKEVIAQHHVCPKC.

It belongs to the AccD/PCCB family. Acetyl-CoA carboxylase is a heterohexamer composed of biotin carboxyl carrier protein (AccB), biotin carboxylase (AccC) and two subunits each of ACCase subunit alpha (AccA) and ACCase subunit beta (AccD). It depends on Zn(2+) as a cofactor.

It localises to the cytoplasm. It carries out the reaction N(6)-carboxybiotinyl-L-lysyl-[protein] + acetyl-CoA = N(6)-biotinyl-L-lysyl-[protein] + malonyl-CoA. The protein operates within lipid metabolism; malonyl-CoA biosynthesis; malonyl-CoA from acetyl-CoA: step 1/1. Its function is as follows. Component of the acetyl coenzyme A carboxylase (ACC) complex. Biotin carboxylase (BC) catalyzes the carboxylation of biotin on its carrier protein (BCCP) and then the CO(2) group is transferred by the transcarboxylase to acetyl-CoA to form malonyl-CoA. The protein is Acetyl-coenzyme A carboxylase carboxyl transferase subunit beta of Wolinella succinogenes (strain ATCC 29543 / DSM 1740 / CCUG 13145 / JCM 31913 / LMG 7466 / NCTC 11488 / FDC 602W) (Vibrio succinogenes).